The sequence spans 681 residues: Ribosomal L1 domain-containing protein CG13096 (681 aa).

2 disordered regions span residues methionine 1–lysine 248 and aspartate 579–glutamate 681. A phosphoserine mark is found at serine 15 and serine 17. The span at valine 54–glutamine 74 shows a compositional bias: basic and acidic residues. Serine 89 carries the phosphoserine modification. Over residues lysine 103–glycine 112 the composition is skewed to low complexity. Serine 128 is modified (phosphoserine). The segment covering glutamine 189–proline 217 has biased composition (low complexity). A compositionally biased stretch (basic and acidic residues) spans lysine 599–alanine 610. Over residues glutamate 611–glutamate 681 the composition is skewed to acidic residues.

Belongs to the universal ribosomal protein uL1 family. Highly divergent.

The protein is Ribosomal L1 domain-containing protein CG13096 of Drosophila melanogaster (Fruit fly).